The chain runs to 237 residues: Class B acid phosphatase (237 aa).

A signal peptide spans 1–25; the sequence is MRKVSLALSAACLLFTLNYTASALA. The active-site Nucleophile is the Asp-69. Residues Asp-69 and Asp-71 each coordinate Mg(2+). The Proton donor role is filled by Asp-71. Substrate-binding positions include 137–138 and Lys-177; that span reads TG. Asp-192 contributes to the Mg(2+) binding site.

The protein belongs to the class B bacterial acid phosphatase family. As to quaternary structure, homotetramer. The cofactor is Mg(2+).

Its subcellular location is the periplasm. It carries out the reaction a phosphate monoester + H2O = an alcohol + phosphate. In terms of biological role, dephosphorylates several organic phosphate monoesters. Also has a phosphotransferase activity catalyzing the transfer of low-energy phosphate groups from organic phosphate monoesters to free hydroxyl groups of various organic compounds. In Citrobacter rodentium (strain ICC168) (Citrobacter freundii biotype 4280), this protein is Class B acid phosphatase.